A 486-amino-acid polypeptide reads, in one-letter code: Shugoshin-1 (486 aa).

A coiled-coil region spans residues 71–154; the sequence is IEVSRVELQK…QNRAKILEKK (84 aa). Disordered regions lie at residues 137–163, 187–209, 222–251, 323–346, 382–403, and 418–467; these read MSKT…CAPT, YTSC…RKSE, HSCR…ARLN, AGSS…PRKS, PIQH…DPGP, and TVAP…SRRA. Positions 331-346 are enriched in basic and acidic residues; it reads EAHKFDIEDPEPPRKS. Residues 387–396 are compositionally biased toward basic residues; that stretch reads QKRKLSRRKS. Polar residues predominate over residues 423–433; it reads APSSSNALIEQ.

Belongs to the shugoshin family. Highly expressed in roots. Expressed in panicles. Expressed at low levels in leaves.

It is found in the nucleus. The protein localises to the nucleolus. It localises to the chromosome. The protein resides in the centromere. In terms of biological role, plays a central role in chromosome cohesion during meiosis I by preventing premature dissociation of cohesin complex from centromeres after prophase, when most of cohesin complex dissociates from chromosomes arms. Required for the timely assembly and maintenance of synaptonemal complex (SC) during early prophase I. Required for maintenance of centromeric cohesion before prophase II and correct segregation of chromatids during meiosis II. Has apparently no function in mitosis. The sequence is that of Shugoshin-1 from Oryza sativa subsp. japonica (Rice).